The primary structure comprises 114 residues: UPF0102 protein CD630_12710 (114 aa).

This sequence belongs to the UPF0102 family.

This Clostridioides difficile (strain 630) (Peptoclostridium difficile) protein is UPF0102 protein CD630_12710.